A 395-amino-acid polypeptide reads, in one-letter code: MFFGAFWLLLLLLLPPLRPPGAQGHRGAKSPEQEADEPIPWPSIQRLREQLRTAGTLSKRYWALFSCTLWPDHCEDQETPVPPLGWSLPLWGRRSLDMLTSWFCRFQDCCSAGNCRISNNFTGLESDLRVRLHGQHLASKLVLEAVKGYLEMPQVGKALALSFHGWSGTGKNFVARMLVDNLYRDGMRSDCVKMFISTFHFPHPKYVDLYKEDLQRQMQETQRRCQQSTFVFDEAEKLHPGLLELLEPYLEPRSPETHGAELPRAIFLLLSNLGGSVINEVVLGLLKAGWSREEITLQHLEMPLQAEIIKSADSSFGSSRLLKKHLIDLFIPFLPLEYRHVRLCVRDAFLGQDLPYTEEALDEIAKMMTYVPEEEQLFSSQGCKSISQRINLVLP.

An N-terminal signal peptide occupies residues Met-1–Gly-24. The N-linked (GlcNAc...) asparagine glycan is linked to Asn-120. Gly-165–Asn-172 provides a ligand contact to ATP.

It belongs to the ClpA/ClpB family. Torsin subfamily. In terms of assembly, may not form homohexamers. Post-translationally, N-glycosylated.

The protein resides in the cytoplasm. The protein localises to the endoplasmic reticulum lumen. The protein is Torsin-3A (Tor3a) of Rattus norvegicus (Rat).